Reading from the N-terminus, the 118-residue chain is UPF0295 protein BCE_0593 (118 aa).

Helical transmembrane passes span 12-32 (IRTF…LGVF) and 43-63 (FMMV…WIGM).

This sequence belongs to the UPF0295 family.

Its subcellular location is the cell membrane. The sequence is that of UPF0295 protein BCE_0593 from Bacillus cereus (strain ATCC 10987 / NRS 248).